The sequence spans 475 residues: tRNA-2-methylthio-N(6)-dimethylallyladenosine synthase (475 aa).

The MTTase N-terminal domain occupies 3 to 120 (KKLHIKTWGC…LPEMIDQIRA (118 aa)). Cys12, Cys49, Cys83, Cys157, Cys161, and Cys164 together coordinate [4Fe-4S] cluster. In terms of domain architecture, Radical SAM core spans 143–375 (RADGPSAFVS…QDRITQQAMR (233 aa)). The 64-residue stretch at 378-441 (RQMVGTVQRI…TNSLRGVFIR (64 aa)) folds into the TRAM domain.

This sequence belongs to the methylthiotransferase family. MiaB subfamily. As to quaternary structure, monomer. [4Fe-4S] cluster is required as a cofactor.

The protein resides in the cytoplasm. It carries out the reaction N(6)-dimethylallyladenosine(37) in tRNA + (sulfur carrier)-SH + AH2 + 2 S-adenosyl-L-methionine = 2-methylsulfanyl-N(6)-dimethylallyladenosine(37) in tRNA + (sulfur carrier)-H + 5'-deoxyadenosine + L-methionine + A + S-adenosyl-L-homocysteine + 2 H(+). In terms of biological role, catalyzes the methylthiolation of N6-(dimethylallyl)adenosine (i(6)A), leading to the formation of 2-methylthio-N6-(dimethylallyl)adenosine (ms(2)i(6)A) at position 37 in tRNAs that read codons beginning with uridine. The chain is tRNA-2-methylthio-N(6)-dimethylallyladenosine synthase from Shewanella halifaxensis (strain HAW-EB4).